The following is a 136-amino-acid chain: Small ribosomal subunit protein uS8c (136 aa).

The protein belongs to the universal ribosomal protein uS8 family. Part of the 30S ribosomal subunit.

It localises to the plastid. The protein localises to the chloroplast. Functionally, one of the primary rRNA binding proteins, it binds directly to 16S rRNA central domain where it helps coordinate assembly of the platform of the 30S subunit. This chain is Small ribosomal subunit protein uS8c (rps8), found in Tetradesmus obliquus (Green alga).